A 250-amino-acid chain; its full sequence is MMIDLNADLGEGGANDSALLQLVSSANIACGFHAGDAGLMVQSVREALKYGVAVGAHPGYPDRENFGRTAMDLPPETVYAQMLYQIGALAAIVQAQGGELQHVKPHGMLYNQAAKSPPLADAIARAIRDVNPKLVLVGLAGSELIRAGQHYGLTTRQEVFADRGYLADGSLVPRSQPGALIDSEEQALAQTLEMVQHHRVRSISGEWANVVAQTVCLHGDGPHALDFARRLRAAFAGRHILVSAQLDAEA.

Belongs to the LamB/PxpA family. In terms of assembly, forms a complex composed of PxpA, PxpB and PxpC.

The enzyme catalyses 5-oxo-L-proline + ATP + 2 H2O = L-glutamate + ADP + phosphate + H(+). Catalyzes the cleavage of 5-oxoproline to form L-glutamate coupled to the hydrolysis of ATP to ADP and inorganic phosphate. This Klebsiella pneumoniae (strain 342) protein is 5-oxoprolinase subunit A.